A 430-amino-acid polypeptide reads, in one-letter code: Glutamate-1-semialdehyde 2,1-aminomutase (430 aa).

Lys269 carries the post-translational modification N6-(pyridoxal phosphate)lysine.

It belongs to the class-III pyridoxal-phosphate-dependent aminotransferase family. HemL subfamily. Homodimer. Pyridoxal 5'-phosphate is required as a cofactor.

It is found in the cytoplasm. It carries out the reaction (S)-4-amino-5-oxopentanoate = 5-aminolevulinate. Its pathway is porphyrin-containing compound metabolism; protoporphyrin-IX biosynthesis; 5-aminolevulinate from L-glutamyl-tRNA(Glu): step 2/2. In Desulfitobacterium hafniense (strain DSM 10664 / DCB-2), this protein is Glutamate-1-semialdehyde 2,1-aminomutase.